A 378-amino-acid polypeptide reads, in one-letter code: Zinc transporter 7 (378 aa).

Residues Met1–Asn37 lie on the Cytoplasmic side of the membrane. The helical transmembrane segment at Leu38–Trp58 threads the bilayer. Residues Ser59–Asp67 are Lumenal-facing. A helical membrane pass occupies residues Ser68–Ser88. Residues Lys89–Arg102 are Cytoplasmic-facing. A helical membrane pass occupies residues Ala103 to Phe123. At Ser124–Arg140 the chain is on the lumenal side. A helical transmembrane segment spans residues Leu141 to His161. Positions His161–His220 are his-rich loop. The Cytoplasmic segment spans residues Gly162–Gly238. The tract at residues Ser186 to Thr228 is disordered. A compositionally biased stretch (basic and acidic residues) spans His204–Ser224. The helical transmembrane segment at Val239 to Met259 threads the bilayer. Over Met260–Gly264 the chain is Lumenal. A helical membrane pass occupies residues Leu265–Ile285. Over Pro286–Met378 the chain is Cytoplasmic.

It belongs to the cation diffusion facilitator (CDF) transporter (TC 2.A.4) family. SLC30A subfamily. As to quaternary structure, homooligomer.

It localises to the golgi apparatus membrane. The protein localises to the cytoplasmic vesicle. It is found in the golgi apparatus. Its subcellular location is the trans-Golgi network. The protein resides in the sarcoplasmic reticulum. It localises to the mitochondrion. It catalyses the reaction Zn(2+)(in) = Zn(2+)(out). In terms of biological role, zinc ion transporter mediating zinc entry from the cytosol into the lumen of organelles along the secretory pathway. By contributing to zinc ion homeostasis within the early secretory pathway, regulates the activation and folding of enzymes like alkaline phosphatases. The chain is Zinc transporter 7 from Rattus norvegicus (Rat).